We begin with the raw amino-acid sequence, 557 residues long: GMP synthase [glutamine-hydrolyzing] (557 aa).

The Glutamine amidotransferase type-1 domain occupies 13 to 209 (TILTLDFGSQ…AVDICGANPN (197 aa)). Cys-89 functions as the Nucleophile in the catalytic mechanism. Catalysis depends on residues His-183 and Glu-185. The GMPS ATP-PPase domain occupies 210-414 (WTMSKFVDQE…LGIAHELVMR (205 aa)). 238–244 (SGGVDST) is a binding site for ATP. Arg-311, Asp-476, Lys-549, and Glu-555 together coordinate XMP.

In terms of assembly, homodimer. The cofactor is Mg(2+).

The protein resides in the cytoplasm. The protein localises to the cytosol. The enzyme catalyses XMP + L-glutamine + ATP + H2O = GMP + L-glutamate + AMP + diphosphate + 2 H(+). It functions in the pathway purine metabolism; GMP biosynthesis; GMP from XMP (L-Gln route): step 1/1. With respect to regulation, inhibited by 6-diazo-5-oxo-l-norleucine (DON) and acivicin (ACI). In terms of biological role, catalyzes the conversion of xanthine monophosphate (XMP) to GMP in the presence of glutamine and ATP through an adenyl-XMP intermediate. This is GMP synthase [glutamine-hydrolyzing] (gua1) from Aspergillus fumigatus (strain ATCC MYA-4609 / CBS 101355 / FGSC A1100 / Af293) (Neosartorya fumigata).